Reading from the N-terminus, the 106-residue chain is ATP-dependent Clp protease adapter protein ClpS (106 aa).

A compositionally biased stretch (basic and acidic residues) spans 1–10 (MSQKTVHDQD). Positions 1-22 (MSQKTVHDQDNALLLETGNTKV) are disordered.

It belongs to the ClpS family. In terms of assembly, binds to the N-terminal domain of the chaperone ClpA.

In terms of biological role, involved in the modulation of the specificity of the ClpAP-mediated ATP-dependent protein degradation. This chain is ATP-dependent Clp protease adapter protein ClpS, found in Xylella fastidiosa (strain 9a5c).